A 178-amino-acid polypeptide reads, in one-letter code: Conodipine-P1 (178 aa).

The N-terminal stretch at 1 to 24 (MKLLAPVLWAMAALGVTWLVAVDS) is a signal peptide. A 4-hydroxyproline; partial mark is found at Pro38, Pro42, and Pro49. The active site involves His54. A propeptide spans 98–130 (KREVTSHRATSIAHSRLWKTALDQKSFLNRKAR) (interchain peptide). The residue at position 131 (Gln131) is a Pyrrolidone carboxylic acid. Pro137 is modified (4-hydroxyproline; partial).

It belongs to the phospholipase A2 family. Group IX subfamily. In terms of assembly, heterodimer of an alpha and a beta chain; probably disulfide-linked. Ca(2+) is required as a cofactor. Expressed by the venom duct.

It is found in the secreted. The catalysed reaction is a 1,2-diacyl-sn-glycero-3-phosphocholine + H2O = a 1-acyl-sn-glycero-3-phosphocholine + a fatty acid + H(+). Its function is as follows. Catalyzes the calcium-dependent hydrolysis of the 2-acyl groups in 3-sn-phosphoglycerides. This is Conodipine-P1 from Conus purpurascens (Purple cone).